The sequence spans 200 residues: Putative pseudouridine methyltransferase (200 aa).

S-adenosyl-L-methionine contacts are provided by methionine 133 and cysteine 187.

The protein belongs to the methyltransferase superfamily. TrmY family.

Its subcellular location is the cytoplasm. The protein is Putative pseudouridine methyltransferase of Alcanivorax borkumensis (strain ATCC 700651 / DSM 11573 / NCIMB 13689 / SK2).